A 301-amino-acid chain; its full sequence is Nucleotide-binding protein Helmi_06460 (301 aa).

17–24 provides a ligand contact to ATP; sequence GLSGAGKS. A GTP-binding site is contributed by 68–71; sequence DIRG.

It belongs to the RapZ-like family.

Its function is as follows. Displays ATPase and GTPase activities. The sequence is that of Nucleotide-binding protein Helmi_06460 from Heliobacterium modesticaldum (strain ATCC 51547 / Ice1).